A 125-amino-acid polypeptide reads, in one-letter code: Holo-[acyl-carrier-protein] synthase (125 aa).

Mg(2+) is bound by residues aspartate 8 and glutamate 57.

This sequence belongs to the P-Pant transferase superfamily. AcpS family. The cofactor is Mg(2+).

It localises to the cytoplasm. The enzyme catalyses apo-[ACP] + CoA = holo-[ACP] + adenosine 3',5'-bisphosphate + H(+). Transfers the 4'-phosphopantetheine moiety from coenzyme A to a Ser of acyl-carrier-protein. This is Holo-[acyl-carrier-protein] synthase from Neisseria meningitidis serogroup A / serotype 4A (strain DSM 15465 / Z2491).